A 229-amino-acid polypeptide reads, in one-letter code: Chloride conductance regulatory protein ICln (229 aa).

The protein belongs to the pICln (TC 1.A.47) family. Homooligomer.

It is found in the cytoplasm. Its subcellular location is the nucleus. In terms of biological role, may participate in cellular volume control by activation of a swelling-induced chloride conductance pathway. The chain is Chloride conductance regulatory protein ICln from Arabidopsis thaliana (Mouse-ear cress).